Consider the following 327-residue polypeptide: Zinc transport protein ZntB (327 aa).

The Cytoplasmic portion of the chain corresponds to 1-271 (MDVVAGKALQ…AMNRRTYTMS (271 aa)). A helical membrane pass occupies residues 272–292 (LLAMVFLPTTFLTGLFGVNLG). Residues 293-300 (GIPGNTDS) are Periplasmic-facing. Residues 301–321 (FGFATFCMMLVVLVLGVAWWL) form a helical membrane-spanning segment. Residues 322 to 327 (KHSKWL) lie on the Cytoplasmic side of the membrane.

It belongs to the CorA metal ion transporter (MIT) (TC 1.A.35) family.

The protein resides in the cell inner membrane. The catalysed reaction is Zn(2+)(out) + H(+)(out) = Zn(2+)(in) + H(+)(in). Functionally, zinc transporter. Acts as a Zn(2+):proton symporter, which likely mediates zinc ion uptake. The chain is Zinc transport protein ZntB from Yersinia enterocolitica serotype O:8 / biotype 1B (strain NCTC 13174 / 8081).